A 938-amino-acid chain; its full sequence is Leucine--tRNA ligase 1 (938 aa).

The 'HIGH' region signature appears at 40–50; the sequence is PYTNSPLHIGH. The short motif at 620 to 624 is the 'KMSKS' region element; the sequence is KMSKS. Lys-623 serves as a coordination point for ATP.

Belongs to the class-I aminoacyl-tRNA synthetase family.

Its subcellular location is the cytoplasm. It carries out the reaction tRNA(Leu) + L-leucine + ATP = L-leucyl-tRNA(Leu) + AMP + diphosphate. The polypeptide is Leucine--tRNA ligase 1 (Metallosphaera sedula (strain ATCC 51363 / DSM 5348 / JCM 9185 / NBRC 15509 / TH2)).